Here is a 205-residue protein sequence, read N- to C-terminus: uncharacterized protein (205 aa).

A helical transmembrane segment spans residues 5–27 (IIVLFIIHFIMINENVFIALLHY).

The protein to T.maritima TM1570.

The protein localises to the membrane. This is an uncharacterized protein from Aquifex aeolicus (strain VF5).